A 367-amino-acid polypeptide reads, in one-letter code: 3-dehydroquinate synthase (367 aa).

Residues 99-103, 123-124, lysine 136, lysine 145, and 163-166 each bind NAD(+); these read GVVGD, TT, and FLRT. Zn(2+) is bound by residues glutamate 178, histidine 242, and histidine 259.

The protein belongs to the sugar phosphate cyclases superfamily. Dehydroquinate synthase family. Co(2+) is required as a cofactor. The cofactor is Zn(2+). NAD(+) serves as cofactor.

It is found in the cytoplasm. The enzyme catalyses 7-phospho-2-dehydro-3-deoxy-D-arabino-heptonate = 3-dehydroquinate + phosphate. The protein operates within metabolic intermediate biosynthesis; chorismate biosynthesis; chorismate from D-erythrose 4-phosphate and phosphoenolpyruvate: step 2/7. Functionally, catalyzes the conversion of 3-deoxy-D-arabino-heptulosonate 7-phosphate (DAHP) to dehydroquinate (DHQ). This Chlorobaculum parvum (strain DSM 263 / NCIMB 8327) (Chlorobium vibrioforme subsp. thiosulfatophilum) protein is 3-dehydroquinate synthase.